The primary structure comprises 259 residues: Dihydroorotate dehydrogenase B (NAD(+)), electron transfer subunit (259 aa).

An FAD-binding FR-type domain is found at 1 to 101; the sequence is MKIEDCTVEE…MGPLGRGYDV (101 aa). FAD is bound by residues 52 to 55, 69 to 71, and 76 to 77; these read RPIS, IYR, and GT. [2Fe-2S] cluster contacts are provided by cysteine 223, cysteine 228, cysteine 231, and cysteine 245.

The protein belongs to the PyrK family. In terms of assembly, heterotetramer of 2 PyrK and 2 PyrD type B subunits. Requires [2Fe-2S] cluster as cofactor. FAD is required as a cofactor.

It functions in the pathway pyrimidine metabolism; UMP biosynthesis via de novo pathway; orotate from (S)-dihydroorotate (NAD(+) route): step 1/1. Functionally, responsible for channeling the electrons from the oxidation of dihydroorotate from the FMN redox center in the PyrD type B subunit to the ultimate electron acceptor NAD(+). This chain is Dihydroorotate dehydrogenase B (NAD(+)), electron transfer subunit, found in Fusobacterium nucleatum subsp. nucleatum (strain ATCC 25586 / DSM 15643 / BCRC 10681 / CIP 101130 / JCM 8532 / KCTC 2640 / LMG 13131 / VPI 4355).